Here is a 179-residue protein sequence, read N- to C-terminus: Peptidyl-tRNA hydrolase (179 aa).

Tyr15 provides a ligand contact to tRNA. The Proton acceptor role is filled by His20. TRNA-binding residues include Tyr66, Asn68, and Asn114.

This sequence belongs to the PTH family. Monomer.

The protein resides in the cytoplasm. It catalyses the reaction an N-acyl-L-alpha-aminoacyl-tRNA + H2O = an N-acyl-L-amino acid + a tRNA + H(+). In terms of biological role, hydrolyzes ribosome-free peptidyl-tRNAs (with 1 or more amino acids incorporated), which drop off the ribosome during protein synthesis, or as a result of ribosome stalling. Functionally, catalyzes the release of premature peptidyl moieties from peptidyl-tRNA molecules trapped in stalled 50S ribosomal subunits, and thus maintains levels of free tRNAs and 50S ribosomes. In Chlamydia trachomatis serovar L2b (strain UCH-1/proctitis), this protein is Peptidyl-tRNA hydrolase.